A 308-amino-acid chain; its full sequence is Ribonuclease Z (308 aa).

Zn(2+) is bound by residues histidine 63, histidine 65, aspartate 67, histidine 68, histidine 141, aspartate 212, and histidine 270. Residue aspartate 67 is the Proton acceptor of the active site.

Belongs to the RNase Z family. In terms of assembly, homodimer. It depends on Zn(2+) as a cofactor.

It carries out the reaction Endonucleolytic cleavage of RNA, removing extra 3' nucleotides from tRNA precursor, generating 3' termini of tRNAs. A 3'-hydroxy group is left at the tRNA terminus and a 5'-phosphoryl group is left at the trailer molecule.. In terms of biological role, zinc phosphodiesterase, which displays some tRNA 3'-processing endonuclease activity. Probably involved in tRNA maturation, by removing a 3'-trailer from precursor tRNA. The polypeptide is Ribonuclease Z (Pediococcus pentosaceus (strain ATCC 25745 / CCUG 21536 / LMG 10740 / 183-1w)).